A 294-amino-acid polypeptide reads, in one-letter code: UPF0761 membrane protein YPN_0254 (294 aa).

Helical transmembrane passes span 44–64 (LLSL…FPMF), 67–87 (ISIK…GDII), 108–128 (GLIV…NIIW), 136–156 (LVFS…LVGA), 185–205 (VFPL…VPTV), 212–232 (ALIG…GFAM), and 246–266 (VLAV…IVLL).

It belongs to the UPF0761 family.

It localises to the cell inner membrane. This is UPF0761 membrane protein YPN_0254 from Yersinia pestis bv. Antiqua (strain Nepal516).